The chain runs to 433 residues: G2/mitotic-specific cyclin-B1 (433 aa).

Positions 19–47 (INMAGAKRVPTAPAATSKPGLRPRTALGD) are disordered. Lysine 73 is modified (N6-acetyllysine). The interval 93–116 (PVSEPVPEPEPEPEPEPVKEEKLS) is disordered. Position 126 is a phosphoserine; by CDK1 (serine 126). Serine 128 is modified (phosphoserine). A Phosphoserine; by PLK1 modification is found at serine 133. Serine 147 carries the post-translational modification Phosphoserine. Interaction with CDK2 regions lie at residues 169–177 (EYVKDIYAY) and 258–261 (YEEM). Threonine 321 bears the Phosphothreonine mark.

It belongs to the cyclin family. Cyclin AB subfamily. Interacts with the CDC2 protein kinase to form a serine/threonine kinase holoenzyme complex also known as maturation promoting factor (MPF). The cyclin subunit imparts substrate specificity to the complex. Binds HEI10. Interacts with catalytically active RALBP1 and CDC2 during mitosis to form an endocytotic complex during interphase. Interacts with CCNF; interaction is required for nuclear localization. Interacts with CDK5RAP3. Interacts with RFPL4A and UBE2A. Interacts with INCA1. Ubiquitinated by the SCF(NIPA) complex during interphase, leading to its destruction. Deubiquitinated by USP22 during G2/M phase. Post-translationally, phosphorylated by PLK1 at Ser-133 on centrosomes during prophase: phosphorylation by PLK1 does not cause nuclear import. Phosphorylation at Ser-147 was also reported to be mediated by PLK1 but Ser-133 seems to be the primary phosphorylation site.

It is found in the cytoplasm. The protein resides in the nucleus. Its subcellular location is the cytoskeleton. The protein localises to the microtubule organizing center. It localises to the centrosome. In terms of biological role, essential for the control of the cell cycle at the G2/M (mitosis) transition. The protein is G2/mitotic-specific cyclin-B1 (CCNB1) of Homo sapiens (Human).